The sequence spans 363 residues: Phosphoserine aminotransferase (363 aa).

Residue Arg42 participates in L-glutamate binding. Pyridoxal 5'-phosphate-binding positions include 76–77 (GR), Trp102, Thr156, Asp175, and Gln198. At Lys199 the chain carries N6-(pyridoxal phosphate)lysine. Pyridoxal 5'-phosphate is bound at residue 240–241 (NT).

Belongs to the class-V pyridoxal-phosphate-dependent aminotransferase family. SerC subfamily. Homodimer. The cofactor is pyridoxal 5'-phosphate.

Its subcellular location is the cytoplasm. The enzyme catalyses O-phospho-L-serine + 2-oxoglutarate = 3-phosphooxypyruvate + L-glutamate. The catalysed reaction is 4-(phosphooxy)-L-threonine + 2-oxoglutarate = (R)-3-hydroxy-2-oxo-4-phosphooxybutanoate + L-glutamate. It participates in amino-acid biosynthesis; L-serine biosynthesis; L-serine from 3-phospho-D-glycerate: step 2/3. The protein operates within cofactor biosynthesis; pyridoxine 5'-phosphate biosynthesis; pyridoxine 5'-phosphate from D-erythrose 4-phosphate: step 3/5. Catalyzes the reversible conversion of 3-phosphohydroxypyruvate to phosphoserine and of 3-hydroxy-2-oxo-4-phosphonooxybutanoate to phosphohydroxythreonine. The sequence is that of Phosphoserine aminotransferase from Shewanella baltica (strain OS155 / ATCC BAA-1091).